The following is a 1170-amino-acid chain: Disease resistance protein LAZ5 (1170 aa).

Residues 10–172 enclose the TIR domain; the sequence is ESWQVFINFR…KIIDSIKKVL (163 aa). Residue Glu-84 is part of the active site. The disordered stretch occupies residues 193–219; the sequence is EAKNVDTFSPNSSDFPSTSIDDDLSIN. Positions 198–219 are enriched in polar residues; sequence DTFSPNSSDFPSTSIDDDLSIN. Residues 261-513 form the NB-ARC domain; that stretch reads RLKEMEEKLD…DVACFFKSEN (253 aa). LRR repeat units lie at residues 595–616, 622–645, 646–670, 677–700, 723–747, 761–785, 790–813, 815–837, 838–861, 862–885, 888–904, and 905–930; these read MENVRGIFLDMSKVPEEMTFDG, MCNLRYLKIYSSVCHKEGEGIFKF, DTVREIQLPLDKVRYLHWMKYPWEK, PENLVDLELPYSSIKKVWEGVKDT, AKNLERLNLEGCTSLLKLPQEMENM, LTCLQSIKVSSLKILILSDCSKLEE, SENLEELYLDGTAIKGLPPAAGDL, RLVVLNMEGCTELESLPKRLGKQ, KALQELVLSGCSKLESVPTDVKDM, KHLRLLLLDGTRIRKIPKIKSLKC, LSRNIAMVNLQDNLKDF, and SNLKCLVMKNCENLRYLPSLPKCLEY.

The catalysed reaction is NAD(+) + H2O = ADP-D-ribose + nicotinamide + H(+). TIR-NB-LRR receptor-like protein that may play a role in plant innate immunity. May trigger hypersensitive programmed cell death in response to pathogen attack. Involved in tolerance to tobacco ringspot virus (TRSV). The chain is Disease resistance protein LAZ5 from Arabidopsis thaliana (Mouse-ear cress).